Reading from the N-terminus, the 246-residue chain is 3-deoxy-manno-octulosonate cytidylyltransferase (246 aa).

It belongs to the KdsB family.

It localises to the cytoplasm. It catalyses the reaction 3-deoxy-alpha-D-manno-oct-2-ulosonate + CTP = CMP-3-deoxy-beta-D-manno-octulosonate + diphosphate. The protein operates within nucleotide-sugar biosynthesis; CMP-3-deoxy-D-manno-octulosonate biosynthesis; CMP-3-deoxy-D-manno-octulosonate from 3-deoxy-D-manno-octulosonate and CTP: step 1/1. Its pathway is bacterial outer membrane biogenesis; lipopolysaccharide biosynthesis. In terms of biological role, activates KDO (a required 8-carbon sugar) for incorporation into bacterial lipopolysaccharide in Gram-negative bacteria. The chain is 3-deoxy-manno-octulosonate cytidylyltransferase from Rickettsia akari (strain Hartford).